The primary structure comprises 612 residues: Dihydroxy-acid dehydratase (612 aa).

A Mg(2+)-binding site is contributed by Asp81. Cys122 contacts [2Fe-2S] cluster. Mg(2+) is bound by residues Asp123 and Lys124. At Lys124 the chain carries N6-carboxylysine. Cys195 is a [2Fe-2S] cluster binding site. Mg(2+) is bound at residue Glu491. Ser517 functions as the Proton acceptor in the catalytic mechanism.

The protein belongs to the IlvD/Edd family. Homodimer. Requires [2Fe-2S] cluster as cofactor. The cofactor is Mg(2+).

The enzyme catalyses (2R)-2,3-dihydroxy-3-methylbutanoate = 3-methyl-2-oxobutanoate + H2O. The catalysed reaction is (2R,3R)-2,3-dihydroxy-3-methylpentanoate = (S)-3-methyl-2-oxopentanoate + H2O. The protein operates within amino-acid biosynthesis; L-isoleucine biosynthesis; L-isoleucine from 2-oxobutanoate: step 3/4. It functions in the pathway amino-acid biosynthesis; L-valine biosynthesis; L-valine from pyruvate: step 3/4. In terms of biological role, functions in the biosynthesis of branched-chain amino acids. Catalyzes the dehydration of (2R,3R)-2,3-dihydroxy-3-methylpentanoate (2,3-dihydroxy-3-methylvalerate) into 2-oxo-3-methylpentanoate (2-oxo-3-methylvalerate) and of (2R)-2,3-dihydroxy-3-methylbutanoate (2,3-dihydroxyisovalerate) into 2-oxo-3-methylbutanoate (2-oxoisovalerate), the penultimate precursor to L-isoleucine and L-valine, respectively. The protein is Dihydroxy-acid dehydratase of Sinorhizobium medicae (strain WSM419) (Ensifer medicae).